The sequence spans 174 residues: Neuromedin-U (174 aa).

Positions 1-34 (MLRTESCRPRSPAGQVAAASPLLLLLLLLAWCAG) are cleaved as a signal peptide. Residues 35-103 (ACRGAPILPQ…EQDEKDNTKR (69 aa)) constitute a propeptide that is removed on maturation. Met139 is modified (methionine sulfoxide; partial). Asn166 is subject to Asparagine amide. Positions 170–174 (SAGFI) are excised as a propeptide.

The protein belongs to the NmU family. In terms of tissue distribution, expressed throughout the enteric nervous system with highest levels being found in the jejunum.

It localises to the secreted. Its function is as follows. Ligand for receptors NMUR1 and NMUR2. Stimulates muscle contractions of specific regions of the gastrointestinal tract. In humans, NmU stimulates contractions of the ileum and urinary bladder. Does not function as a ligand for either NMUR1 or NMUR2. Indirectly induces prolactin release although its potency is much lower than that of neuromedin precursor-related peptide 36. Functionally, does not function as a ligand for either NMUR1 or NMUR2. Indirectly induces prolactin release from lactotroph cells in the pituitary gland, probably via the hypothalamic dopaminergic system. The protein is Neuromedin-U (NMU) of Homo sapiens (Human).